The following is a 1383-amino-acid chain: DNA-directed RNA polymerase subunit beta'' (1383 aa).

The Zn(2+) site is built by cysteine 220, cysteine 289, cysteine 296, and cysteine 299.

This sequence belongs to the RNA polymerase beta' chain family. RpoC2 subfamily. As to quaternary structure, in plastids the minimal PEP RNA polymerase catalytic core is composed of four subunits: alpha, beta, beta', and beta''. When a (nuclear-encoded) sigma factor is associated with the core the holoenzyme is formed, which can initiate transcription. Zn(2+) serves as cofactor.

Its subcellular location is the plastid. The protein localises to the chloroplast. The enzyme catalyses RNA(n) + a ribonucleoside 5'-triphosphate = RNA(n+1) + diphosphate. Functionally, DNA-dependent RNA polymerase catalyzes the transcription of DNA into RNA using the four ribonucleoside triphosphates as substrates. In Oenothera argillicola (Appalachian evening primrose), this protein is DNA-directed RNA polymerase subunit beta''.